Consider the following 29-residue polypeptide: Dermaseptin-1.2TR (29 aa).

Position 29 is a valine amide (Val29).

In terms of tissue distribution, expressed by the skin glands.

It is found in the secreted. In terms of biological role, has antimicrobial activity. This chain is Dermaseptin-1.2TR, found in Phyllomedusa trinitatis (Trinidad leaf frog).